Here is a 249-residue protein sequence, read N- to C-terminus: Tetraspanin-7 (249 aa).

Topologically, residues 1–16 (MASRRMETKPVITCLK) are cytoplasmic. A helical transmembrane segment spans residues 17 to 40 (TLLIIYSFVFWITGVILLAVGVWG). At 41-56 (KLTLGTYISLIAENST) the chain is on the extracellular side. Asparagine 54 carries N-linked (GlcNAc...) asparagine glycosylation. A helical transmembrane segment spans residues 57–75 (NAPYVLIGTGTTIVVFGLF). Over 76 to 86 (GCFATCRGSPW) the chain is Cytoplasmic. The helical transmembrane segment at 87-112 (MLKLYAMFLSLVFLAELVAGISGFVF) threads the bilayer. The Extracellular segment spans residues 113–213 (RHEIKDTFLR…LVTSFMETNM (101 aa)). Residues asparagine 155, asparagine 158, asparagine 177, and asparagine 188 are each glycosylated (N-linked (GlcNAc...) asparagine). A helical membrane pass occupies residues 214-234 (GIIAGVAFGIAFSQLIGMLLA). The Cytoplasmic segment spans residues 235–249 (CCLSRFITANQYEMV).

This sequence belongs to the tetraspanin (TM4SF) family.

It is found in the membrane. May be involved in cell proliferation and cell motility. The chain is Tetraspanin-7 (Tspan7) from Mus musculus (Mouse).